Reading from the N-terminus, the 160-residue chain is Zinc finger A20 and AN1 domain-containing stress-associated protein 6 (160 aa).

The A20-type zinc-finger motif lies at 18–52; that stretch reads PEAPILCVNNCGFFGSRMTENMCSKCYRDTVKAKT. 4 residues coordinate Zn(2+): Cys24, Cys28, Cys40, and Cys43. Residues 73–94 are disordered; sequence EVTDGGSGSVADGKQVMEEDTP. The segment at 95–141 adopts an AN1-type zinc-finger fold; that stretch reads KPPSNRCLSCRKKVGLTGFKCRCGGTFCSMHRYADSHKCTFDYKQVG. Residues Cys101, Cys104, Cys115, Cys117, Cys122, His125, His131, and Cys133 each coordinate Zn(2+).

In terms of biological role, may be involved in environmental stress response. The chain is Zinc finger A20 and AN1 domain-containing stress-associated protein 6 (SAP6) from Oryza sativa subsp. japonica (Rice).